The following is a 323-amino-acid chain: GTP 3',8-cyclase (323 aa).

The region spanning 4–233 (KYGREIDYLR…NGPAKYISIE (230 aa)) is the Radical SAM core domain. Arginine 13 contacts GTP. [4Fe-4S] cluster is bound by residues cysteine 20 and cysteine 24. Tyrosine 26 serves as a coordination point for S-adenosyl-L-methionine. Cysteine 27 is a binding site for [4Fe-4S] cluster. Arginine 63 lines the GTP pocket. Residue glycine 67 coordinates S-adenosyl-L-methionine. Threonine 94 is a GTP binding site. S-adenosyl-L-methionine is bound at residue serine 118. Lysine 154 is a binding site for GTP. Methionine 188 provides a ligand contact to S-adenosyl-L-methionine. Residues cysteine 250 and cysteine 253 each coordinate [4Fe-4S] cluster. 255–257 (RIR) contributes to the GTP binding site. Cysteine 267 lines the [4Fe-4S] cluster pocket.

The protein belongs to the radical SAM superfamily. MoaA family. In terms of assembly, monomer and homodimer. [4Fe-4S] cluster serves as cofactor.

It carries out the reaction GTP + AH2 + S-adenosyl-L-methionine = (8S)-3',8-cyclo-7,8-dihydroguanosine 5'-triphosphate + 5'-deoxyadenosine + L-methionine + A + H(+). Its pathway is cofactor biosynthesis; molybdopterin biosynthesis. In terms of biological role, catalyzes the cyclization of GTP to (8S)-3',8-cyclo-7,8-dihydroguanosine 5'-triphosphate. The polypeptide is GTP 3',8-cyclase (Clostridium perfringens (strain 13 / Type A)).